Here is a 520-residue protein sequence, read N- to C-terminus: Protein RCC2 (520 aa).

Residues 1 to 78 (MPRKKGAAWE…RPATAGKAAG (78 aa)) form a disordered region. Serine 14 carries the phosphoserine modification. Threonine 18 carries the post-translational modification Phosphothreonine. The segment covering 22 to 34 (GPRRRGGPAGRKR) has biased composition (basic residues). Serine 41, serine 42, serine 43, serine 44, serine 48, and serine 49 each carry phosphoserine. Residues 69 to 78 (RPATAGKAAG) are compositionally biased toward low complexity. N6-acetyllysine occurs at positions 90 and 122. RCC1 repeat units follow at residues 101-163 (KGQL…SLLI), 166-217 (EGKL…ALTD), 219-269 (GSVF…LMDC), 271-345 (GNLY…VLDS), 346-399 (QKRV…AVSE), 401-445 (GGLF…VAAD), and 446-499 (ESTI…VIAR). Residue lysine 291 is modified to N6-acetyllysine. Residues 316–323 (KTKDGQIL) form a required for interaction with RAC1 region. Position 340 is a phosphothreonine (threonine 340). Lysine 375 is subject to N6-acetyllysine.

In terms of assembly, interacts with RAC1. Interacts with nucleotide-free and with GDP and GTP-bound forms of RAC1, with a slight preference for GDP-bound RAC1. Binds preferentially to the nucleotide-free form of RAC1. Interacts with CORO1C. Interacts with microtubules.

It localises to the nucleus. It is found in the nucleolus. Its subcellular location is the cytoplasm. The protein localises to the cytoskeleton. The protein resides in the chromosome. It localises to the centromere. It is found in the spindle. Its subcellular location is the midbody. The protein localises to the cell membrane. Multifunctional protein that may affect its functions by regulating the activity of small GTPases, such as RAC1 and RALA. Required for normal progress through the cell cycle, both during interphase and during mitosis. Required for the presence of normal levels of MAD2L1, AURKB and BIRC5 on inner centromeres during mitosis, and for normal attachment of kinetochores to mitotic spindles. Required for normal organization of the microtubule cytoskeleton in interphase cells. Functions as a guanine nucleotide exchange factor (GEF) for RALA. Interferes with the activation of RAC1 by guanine nucleotide exchange factors. Prevents accumulation of active, GTP-bound RAC1, and suppresses RAC1-mediated reorganization of the actin cytoskeleton and formation of membrane protrusions. Required for normal cellular responses to contacts with the extracellular matrix of adjacent cells, and for directional cell migration in response to a fibronectin gradient (in vitro). The protein is Protein RCC2 (Rcc2) of Mus musculus (Mouse).